An 844-amino-acid polypeptide reads, in one-letter code: Janus kinase and microtubule-interacting protein 3 (844 aa).

Residues 8-259 (SRAKGDKAET…LSQAKEAERH (252 aa)) adopt a coiled-coil conformation. The segment at 249–290 (QLSQAKEAERHPGSPRRELPYASGAGDASDHSGSPEQQLDEK) is disordered. The span at 254–267 (KEAERHPGSPRREL) shows a compositional bias: basic and acidic residues. Residues 270–282 (ASGAGDASDHSGS) show a composition bias toward low complexity. Positions 289–421 (EKDARRFQLK…DELSKTLETA (133 aa)) form a coiled coil. Position 384 is a phosphoserine (Ser-384). Positions 466–483 (SDGSSISYQTDRTDQTPC) are enriched in polar residues. Residues 466-488 (SDGSSISYQTDRTDQTPCTPEDD) are disordered. 2 coiled-coil regions span residues 493-621 (MAKE…RERK) and 688-833 (EKWL…LFLF).

Belongs to the JAKMIP family.

The protein resides in the golgi apparatus. In Mus musculus (Mouse), this protein is Janus kinase and microtubule-interacting protein 3 (Jakmip3).